The primary structure comprises 59 residues: Photosystem II reaction center protein K (59 aa).

Residues 1 to 22 constitute a propeptide that is removed on maturation; that stretch reads MLNIFSLICLNSDLYSSRFFLA. Residues 38–58 form a helical membrane-spanning segment; it reads MPVIPLFFLLLAFVWQAAVSF.

The protein belongs to the PsbK family. In terms of assembly, PSII is composed of 1 copy each of membrane proteins PsbA, PsbB, PsbC, PsbD, PsbE, PsbF, PsbH, PsbI, PsbJ, PsbK, PsbL, PsbM, PsbT, PsbX, PsbY, PsbZ, Psb30/Ycf12, at least 3 peripheral proteins of the oxygen-evolving complex and a large number of cofactors. It forms dimeric complexes.

The protein resides in the plastid. Its subcellular location is the chloroplast thylakoid membrane. In terms of biological role, one of the components of the core complex of photosystem II (PSII). PSII is a light-driven water:plastoquinone oxidoreductase that uses light energy to abstract electrons from H(2)O, generating O(2) and a proton gradient subsequently used for ATP formation. It consists of a core antenna complex that captures photons, and an electron transfer chain that converts photonic excitation into a charge separation. This chain is Photosystem II reaction center protein K, found in Oenothera elata subsp. hookeri (Hooker's evening primrose).